Reading from the N-terminus, the 222-residue chain is GTP cyclohydrolase 1 (222 aa).

Residues Cys-111, His-114, and Cys-182 each coordinate Zn(2+).

It belongs to the GTP cyclohydrolase I family. As to quaternary structure, toroid-shaped homodecamer, composed of two pentamers of five dimers.

It catalyses the reaction GTP + H2O = 7,8-dihydroneopterin 3'-triphosphate + formate + H(+). It participates in cofactor biosynthesis; 7,8-dihydroneopterin triphosphate biosynthesis; 7,8-dihydroneopterin triphosphate from GTP: step 1/1. The chain is GTP cyclohydrolase 1 from Citrobacter koseri (strain ATCC BAA-895 / CDC 4225-83 / SGSC4696).